The following is a 238-amino-acid chain: Ribonuclease PH (238 aa).

Phosphate contacts are provided by residues R86 and 124-126; that span reads GTR.

Belongs to the RNase PH family. As to quaternary structure, homohexameric ring arranged as a trimer of dimers.

The catalysed reaction is tRNA(n+1) + phosphate = tRNA(n) + a ribonucleoside 5'-diphosphate. Functionally, phosphorolytic 3'-5' exoribonuclease that plays an important role in tRNA 3'-end maturation. Removes nucleotide residues following the 3'-CCA terminus of tRNAs; can also add nucleotides to the ends of RNA molecules by using nucleoside diphosphates as substrates, but this may not be physiologically important. Probably plays a role in initiation of 16S rRNA degradation (leading to ribosome degradation) during starvation. The chain is Ribonuclease PH from Mannheimia haemolytica (Pasteurella haemolytica).